Consider the following 438-residue polypeptide: MKETKFELYELKPFIIDAVHRLGFYEPTDIQKRLIPAVLKKESVIGQSQTGTGKTHAYLLPLLNKIDPAKDVVQVVITAPTRELANQIYQEALKITQGEEGSQIRSKCFIGGTDKQKSIDKLKIQPHLVVGTPGRIADLIKEQALSVHKAESLVIDEADLMLDMGFLADVDYIGSRMPEDLQMLVFSATIPEKLKPFLKKYMENPKYAHVEPKQVTAAKIEHILIPSKHRDKDKLLFDIMSHLNPYLGIVFANTKNTADHIAQYLTGKGMKIGLLHGGLTPRERKKVMKQINDLEFTYIIATDLAARGIDIKGVSHVINYELPDDLDFYVHRVGRTARAGSSGQAMTIYELTDEDALVRLEKMGIEFEYLELEKGEWKKGDDRQRRKKRKKTPNEADEIAHRLVKKPKKVKPGYKKKMSYEMEKIKKKQRRNQSKKRK.

The Q motif motif lies at 4–32 (TKFELYELKPFIIDAVHRLGFYEPTDIQK). In terms of domain architecture, Helicase ATP-binding spans 35-208 (IPAVLKKESV…KKYMENPKYA (174 aa)). 48-55 (SQTGTGKT) is a binding site for ATP. The DEAD box signature appears at 156 to 159 (DEAD). Positions 235-385 (LLFDIMSHLN…EWKKGDDRQR (151 aa)) constitute a Helicase C-terminal domain. The disordered stretch occupies residues 380 to 438 (GDDRQRRKKRKKTPNEADEIAHRLVKKPKKVKPGYKKKMSYEMEKIKKKQRRNQSKKRK). Residues 392 to 401 (TPNEADEIAH) are compositionally biased toward basic and acidic residues. Basic residues-rich tracts occupy residues 402–417 (RLVKKPKKVKPGYKKK) and 425–438 (IKKKQRRNQSKKRK).

This sequence belongs to the DEAD box helicase family. As to quaternary structure, interacts with CspB when cells are transcriptionally active. May interact with RNA helicases CshA and DbpA (DeaD), may be a component of a possible RNA degradosome complex composed of rny, rnja, rnjb, pnp, pfkA and eno (although rnjA and rnjB's presence is unclear). Specifically interacts with pnp and rny.

It localises to the cytoplasm. Its subcellular location is the nucleoid. It carries out the reaction ATP + H2O = ADP + phosphate + H(+). Functionally, DEAD-box RNA helicase that plays a role in 70S ribosome assembly. May work in conjunction with the cold shock proteins to ensure proper initiation of transcription at low and optimal temperatures. In Bacillus subtilis (strain 168), this protein is DEAD-box ATP-dependent RNA helicase CshB.